Here is a 206-residue protein sequence, read N- to C-terminus: Dephospho-CoA kinase (206 aa).

In terms of domain architecture, DPCK spans 4-200; sequence IVALTGGIGS…AHYLQLASQF (197 aa). Residue 12–17 participates in ATP binding; sequence GSGKST.

Belongs to the CoaE family.

Its subcellular location is the cytoplasm. The catalysed reaction is 3'-dephospho-CoA + ATP = ADP + CoA + H(+). It participates in cofactor biosynthesis; coenzyme A biosynthesis; CoA from (R)-pantothenate: step 5/5. Its function is as follows. Catalyzes the phosphorylation of the 3'-hydroxyl group of dephosphocoenzyme A to form coenzyme A. The polypeptide is Dephospho-CoA kinase (Shigella flexneri).